An 85-amino-acid chain; its full sequence is UPF0297 protein LGAS_0422 (85 aa).

It belongs to the UPF0297 family.

The chain is UPF0297 protein LGAS_0422 from Lactobacillus gasseri (strain ATCC 33323 / DSM 20243 / BCRC 14619 / CIP 102991 / JCM 1131 / KCTC 3163 / NCIMB 11718 / NCTC 13722 / AM63).